The primary structure comprises 757 residues: 5-methyltetrahydropteroyltriglutamate--homocysteine methyltransferase (757 aa).

Residues R17–K20 and K117 contribute to the 5-methyltetrahydropteroyltri-L-glutamate site. L-homocysteine contacts are provided by residues I432–S434 and E485. L-methionine-binding positions include I432 to S434 and E485. Residues R516–C517 and W562 each bind 5-methyltetrahydropteroyltri-L-glutamate. Residue D600 coordinates L-homocysteine. D600 serves as a coordination point for L-methionine. E606 is a binding site for 5-methyltetrahydropteroyltri-L-glutamate. Zn(2+) contacts are provided by H642, C644, and E666. The active-site Proton donor is H695. Zn(2+) is bound at residue C727.

The protein belongs to the vitamin-B12 independent methionine synthase family. Zn(2+) is required as a cofactor.

The enzyme catalyses 5-methyltetrahydropteroyltri-L-glutamate + L-homocysteine = tetrahydropteroyltri-L-glutamate + L-methionine. It functions in the pathway amino-acid biosynthesis; L-methionine biosynthesis via de novo pathway; L-methionine from L-homocysteine (MetE route): step 1/1. Catalyzes the transfer of a methyl group from 5-methyltetrahydrofolate to homocysteine resulting in methionine formation. In Erwinia tasmaniensis (strain DSM 17950 / CFBP 7177 / CIP 109463 / NCPPB 4357 / Et1/99), this protein is 5-methyltetrahydropteroyltriglutamate--homocysteine methyltransferase.